Consider the following 296-residue polypeptide: MYLSLLKSLNRLSPRAWDFVQLTRIDKPIGIYLLLWPTLWAVWIAGKGSPSLNTVFIFVAGVFLMRAAGCVINDFADRKVDGHVKRTEQRPLVSGKVSSREALVLFAVLVSLSFVLVLFTNSTTIWLSFGGLALAACYPFMKRYTYYPQVVLGAAFSWGMPMAFTAETGELPAAAWLLYIANLLWTVGYDTYYAMVDRDDDLKIGVKSTAVLFGDADRVIILSLQGLALGCLALAGSRFELGAFFYMGLLVAAACFAWEFWSTRLRERDACFKAFLHNHWAGLAIFLGIVADYALR.

9 helical membrane passes run 28–48 (PIGIYLLLWPTLWAVWIAGKG), 52–72 (LNTVFIFVAGVFLMRAAGCVI), 102–122 (ALVLFAVLVSLSFVLVLFTNS), 123–140 (TTIWLSFGGLALAACYPF), 146–166 (YYPQVVLGAAFSWGMPMAFTA), 169–189 (GELPAAAWLLYIANLLWTVGY), 219–239 (VIILSLQGLALGCLALAGSRF), 241–261 (LGAFFYMGLLVAAACFAWEFW), and 275–295 (FLHNHWAGLAIFLGIVADYAL).

Belongs to the UbiA prenyltransferase family. Mg(2+) serves as cofactor.

It localises to the cell inner membrane. The enzyme catalyses all-trans-octaprenyl diphosphate + 4-hydroxybenzoate = 4-hydroxy-3-(all-trans-octaprenyl)benzoate + diphosphate. It functions in the pathway cofactor biosynthesis; ubiquinone biosynthesis. Catalyzes the prenylation of para-hydroxybenzoate (PHB) with an all-trans polyprenyl group. Mediates the second step in the final reaction sequence of ubiquinone-8 (UQ-8) biosynthesis, which is the condensation of the polyisoprenoid side chain with PHB, generating the first membrane-bound Q intermediate 3-octaprenyl-4-hydroxybenzoate. The polypeptide is 4-hydroxybenzoate octaprenyltransferase (Pseudomonas syringae pv. tomato (strain ATCC BAA-871 / DC3000)).